The chain runs to 477 residues: ATP synthase subunit beta (477 aa).

Residue 163–170 participates in ATP binding; that stretch reads GGAGVGKT.

This sequence belongs to the ATPase alpha/beta chains family. In terms of assembly, F-type ATPases have 2 components, CF(1) - the catalytic core - and CF(0) - the membrane proton channel. CF(1) has five subunits: alpha(3), beta(3), gamma(1), delta(1), epsilon(1). CF(0) has four main subunits: a(1), b(1), b'(1) and c(9-12).

The protein resides in the cellular thylakoid membrane. It catalyses the reaction ATP + H2O + 4 H(+)(in) = ADP + phosphate + 5 H(+)(out). Produces ATP from ADP in the presence of a proton gradient across the membrane. The catalytic sites are hosted primarily by the beta subunits. This is ATP synthase subunit beta from Synechococcus sp. (strain JA-3-3Ab) (Cyanobacteria bacterium Yellowstone A-Prime).